The primary structure comprises 960 residues: Endosome/lysosome-associated apoptosis and autophagy regulator family member 2 (960 aa).

Positions 1-26 (MLFLRPGPARGRGRGRPARAPHSGLS) are disordered. Positions 1–44 (MLFLRPGPARGRGRGRPARAPHSGLSPPWSPAWICCWALAGCQA) are cleaved as a signal peptide. Topologically, residues 45–860 (AWAGAGDLPS…TCETVDFWLK (816 aa)) are extracellular. N-linked (GlcNAc...) asparagine glycosylation is present at asparagine 171. 3 cysteine pairs are disulfide-bonded: cysteine 295-cysteine 312, cysteine 325-cysteine 348, and cysteine 328-cysteine 360. N-linked (GlcNAc...) asparagine glycans are attached at residues asparagine 407 and asparagine 622. An MRH domain is found at 597–808 (PTCPYIRSMA…LWESVEACPL (212 aa)). Disulfide bonds link cysteine 599–cysteine 651, cysteine 661–cysteine 689, cysteine 758–cysteine 794, and cysteine 770–cysteine 806. The helical transmembrane segment at 861–881 (VGAGVGAFTAVLLVALTCYFW) threads the bilayer. The Cytoplasmic portion of the chain corresponds to 882-960 (KKNQKLEYKY…QLKSSRSPNI (79 aa)). Serine 949 carries the phosphoserine modification.

Belongs to the ELAPOR family.

Its subcellular location is the cell membrane. Functions as a regulator of the BMP signaling pathway and may be involved in epidermal differentiation. This chain is Endosome/lysosome-associated apoptosis and autophagy regulator family member 2, found in Bos taurus (Bovine).